Reading from the N-terminus, the 202-residue chain is LexA repressor (202 aa).

A DNA-binding region (H-T-H motif) is located at residues 28–48 (RAEIAQRLGFRSPNAAEEHLK). Residues serine 119 and lysine 156 each act as for autocatalytic cleavage activity in the active site.

It belongs to the peptidase S24 family. As to quaternary structure, homodimer.

It carries out the reaction Hydrolysis of Ala-|-Gly bond in repressor LexA.. In terms of biological role, represses a number of genes involved in the response to DNA damage (SOS response), including recA and lexA. Binds to the 16 bp palindromic sequence 5'-CTGTATATATATACAG-3'. In the presence of single-stranded DNA, RecA interacts with LexA causing an autocatalytic cleavage which disrupts the DNA-binding part of LexA, leading to derepression of the SOS regulon and eventually DNA repair. This chain is LexA repressor, found in Escherichia coli (strain K12 / MC4100 / BW2952).